The sequence spans 930 residues: Isoleucine--tRNA ligase (930 aa).

A 'HIGH' region motif is present at residues 57 to 67 (PYANGHIHLGT). E559 is a binding site for L-isoleucyl-5'-AMP. The short motif at 600-604 (KMSKS) is the 'KMSKS' region element. K603 contributes to the ATP binding site. Zn(2+) contacts are provided by C899, C902, C918, and C921.

It belongs to the class-I aminoacyl-tRNA synthetase family. IleS type 1 subfamily. As to quaternary structure, monomer. Requires Zn(2+) as cofactor.

It is found in the cytoplasm. It catalyses the reaction tRNA(Ile) + L-isoleucine + ATP = L-isoleucyl-tRNA(Ile) + AMP + diphosphate. Its function is as follows. Catalyzes the attachment of isoleucine to tRNA(Ile). As IleRS can inadvertently accommodate and process structurally similar amino acids such as valine, to avoid such errors it has two additional distinct tRNA(Ile)-dependent editing activities. One activity is designated as 'pretransfer' editing and involves the hydrolysis of activated Val-AMP. The other activity is designated 'posttransfer' editing and involves deacylation of mischarged Val-tRNA(Ile). This chain is Isoleucine--tRNA ligase, found in Desulforudis audaxviator (strain MP104C).